The primary structure comprises 677 residues: AP-2 complex subunit beta (677 aa).

The disordered stretch occupies residues 597-677 (RLRTRDSNPS…PMTPETHLMD (81 aa)). Basic residues predominate over residues 616 to 627 (KKYNHFHQKSQT). A compositionally biased stretch (polar residues) spans 636 to 654 (RNSWNPSPFSDESNSNTFS).

It belongs to the adaptor complexes large subunit family. As to quaternary structure, adaptor protein complex 2 (AP-2) is a heterotetramer composed of two large adaptins (alpha-type subunit apl3 and beta-type subunit apl1), a medium chain (mu-type subunit apm4) and a small adaptin (sigma-type subunit aps2).

It localises to the cell membrane. The protein resides in the membrane. The protein localises to the coated pit. Adaptins are components of the adaptor complexes which link clathrin to receptors in coated vesicles. Clathrin-associated protein complexes are believed to interact with the cytoplasmic tails of membrane proteins, leading to their selection and concentration. Beta adaptin is a subunit of the plasma membrane adaptor. This Schizosaccharomyces pombe (strain 972 / ATCC 24843) (Fission yeast) protein is AP-2 complex subunit beta (apl1).